We begin with the raw amino-acid sequence, 373 residues long: Glutamine synthetase (373 aa).

A2 carries the post-translational modification N-acetylalanine. The tract at residues 2–25 (ATSASSHLNKGIKQVYMALPQGDK) is required for glutamine-induced ubiquitination by CRL4(CRBN) and proteasomal degradation. Residues K11 and K14 each carry the N6-acetyllysine modification. Residues 26 to 106 (VQAMYIWIDG…VFCEVFKYNR (81 aa)) form the GS beta-grasp domain. Y104 is subject to Phosphotyrosine. Positions 113-373 (LRHTCKRIMD…TGDEPFQYKN (261 aa)) constitute a GS catalytic domain. Residue E134 participates in ATP binding. Mn(2+) contacts are provided by E134, E136, E196, and E203. 203-208 (EFQIGP) lines the ATP pocket. 246-247 (NW) is an L-glutamate binding site. Mn(2+) is bound at residue H253. ATP-binding positions include 255–257 (NFS), R319, and R324. R319 provides a ligand contact to L-glutamate. 336–338 (YFE) provides a ligand contact to ADP. Mn(2+) is bound at residue E338. Residue R340 coordinates L-glutamate. Residue S343 is modified to Phosphoserine.

Belongs to the glutamine synthetase family. As to quaternary structure, decamer; composed of two pentamers. Interacts with PALMD. Interacts with RHOJ. Interacts with BEST2; this interaction tethers a fraction of GLUL to the membrane, causing a decrease of cytosolic glutamine synthase (GS) activity and inhibits the chloride channel activity of BEST2 by affecting the gating at the aperture in the absence of intracellular glutamate. Mg(2+) is required as a cofactor. Requires Mn(2+) as cofactor. Palmitoylated; undergoes autopalmitoylation. Post-translationally, acetylated by EP300/p300; acetylation is stimulated by increased glutamine levels and promotes ubiquitin-mediated proteasomal degradation. In terms of processing, ubiquitinated by ZNRF1. Ubiquitinated by the DCX (DDB1-CUL4-X-box) E3 ubiquitin-protein ligase complex called CRL4(CRBN), leading to proteasomal degradation.

It localises to the cytoplasm. Its subcellular location is the cytosol. The protein resides in the microsome. It is found in the mitochondrion. The protein localises to the cell membrane. It carries out the reaction L-glutamate + NH4(+) + ATP = L-glutamine + ADP + phosphate + H(+). The catalysed reaction is L-cysteinyl-[protein] + hexadecanoyl-CoA = S-hexadecanoyl-L-cysteinyl-[protein] + CoA. Its activity is regulated as follows. Glutamine synthetase activity is inhibited by methionine sulfoximine (MSO). Its function is as follows. Glutamine synthetase that catalyzes the ATP-dependent conversion of glutamate and ammonia to glutamine. Its role depends on tissue localization: in the brain, it regulates the levels of toxic ammonia and converts neurotoxic glutamate to harmless glutamine, whereas in the liver, it is one of the enzymes responsible for the removal of ammonia. Plays a key role in ammonium detoxification during erythropoiesis: the glutamine synthetase activity is required to remove ammonium generated by porphobilinogen deaminase (HMBS) during heme biosynthesis to prevent ammonium accumulation and oxidative stress. Essential for proliferation of fetal skin fibroblasts. Independently of its glutamine synthetase activity, required for endothelial cell migration during vascular development. Involved in angiogenesis by regulating membrane localization and activation of the GTPase RHOJ, possibly by promoting RHOJ palmitoylation. May act as a palmitoyltransferase for RHOJ: able to autopalmitoylate and then transfer the palmitoyl group to RHOJ. Plays a role in ribosomal 40S subunit biogenesis. Through the interaction with BEST2, inhibits BEST2 channel activity by affecting the gating at the aperture in the absence of intracellular L-glutamate, but sensitizes BEST2 to intracellular L-glutamate, which promotes the opening of BEST2 and thus relieves its inhibitory effect on BEST2. The polypeptide is Glutamine synthetase (Bos taurus (Bovine)).